Here is a 1183-residue protein sequence, read N- to C-terminus: SRC kinase signaling inhibitor 1 (1183 aa).

A disordered region spans residues 1–44 (MGNAPSQDPERSSPPMLSADDAEYPREYRTLGGGGGGGSGGRRF). Ser-13 and Ser-18 each carry phosphoserine. Gly residues predominate over residues 31 to 41 (LGGGGGGGSGG). Ser-45 carries the phosphoserine modification. Thr-52 carries the phosphothreonine modification. 7 positions are modified to phosphoserine: Ser-53, Ser-64, Ser-143, Ser-165, Ser-169, Ser-179, and Ser-225. The residue at position 241 (Tyr-241) is a Phosphotyrosine. The tract at residues 284–379 (ASRESSPTRR…ERRDVKPDED (96 aa)) is disordered. The segment covering 286-296 (RESSPTRRLNN) has biased composition (polar residues). The span at 297–306 (LSPAPHLASG) shows a compositional bias: low complexity. Residues Ser-298, Ser-307, and Ser-324 each carry the phosphoserine modification. Positions 313 to 331 (PSGLPSGLQSGSPSRSRLS) are enriched in low complexity. Omega-N-methylarginine is present on residues Arg-329 and Arg-336. Ser-343, Ser-362, and Ser-364 each carry phosphoserine. A compositionally biased stretch (basic and acidic residues) spans 369 to 379 (LERRDVKPDED). The residue at position 396 (Tyr-396) is a Phosphotyrosine. Residues 466–643 (YGFRLPPSSP…ASSTPAGQPT (178 aa)) form a disordered region. A compositionally biased stretch (pro residues) spans 485–497 (PGGPPPPHSPYSG). Phosphoserine occurs at positions 493, 496, and 500. An Omega-N-methylarginine modification is found at Arg-501. A phosphoserine mark is found at Ser-503, Ser-513, Ser-515, Ser-517, and Ser-522. Over residues 524-541 (GGKTRSAGSASTAGAPPS) the composition is skewed to low complexity. The segment covering 562–574 (KDTETRERMEAME) has biased composition (basic and acidic residues). Ser-598 and Ser-621 each carry phosphoserine. A phosphothreonine mark is found at Thr-624 and Thr-637. The span at 634 to 643 (ASSTPAGQPT) shows a compositional bias: low complexity. Residues 647–697 (RLQMQLHLRGLQNSASDLRGQLQQLRKLQLQNQESVRALLKRTEAELSMRV) are interaction with SNAP25. Coiled-coil stretches lie at residues 654–674 (LRGL…LRKL) and 726–746 (EELI…IQRD). 3 positions are modified to phosphoserine: Ser-844, Ser-857, and Ser-866. Disordered stretches follow at residues 861–907 (EMPP…KAVS) and 949–1032 (DCAS…VTSK). Thr-884 carries the phosphothreonine modification. Position 987 is a phosphoserine (Ser-987). Residues 1002 to 1011 (KSPPPPPPRR) are compositionally biased toward pro residues. Residues Ser-1043 and Ser-1060 each carry the phosphoserine modification. Disordered regions lie at residues 1058–1081 (AVSE…DEDD) and 1105–1183 (GASR…SISF). Residues 1135 to 1183 (QAQQQATKPSKEMSGSNETSSPVSEKPSASRTSIPVLTSFGARNSSISF) show a composition bias toward polar residues.

It belongs to the SRCIN1 family. Interacts with the N-terminal coiled-coil region of SNAP25. Interacts with BCAR1/p130Cas and SRC through its C-terminal domain. Interacts with CSK, CTTN, SORBS3/vinexin, SYP and MAPRE3/EB3. Tyrosine-phosphorylated in response to EGF and to cell adhesion to integrin ligands. In terms of tissue distribution, expressed in some primary breast carcinomas where its presence is significantly associated with increased tumor size. Not detected in normal breast tissue.

The protein localises to the cytoplasm. It localises to the cytoskeleton. It is found in the cell projection. The protein resides in the axon. Its subcellular location is the dendrite. The protein localises to the presynapse. It localises to the postsynapse. It is found in the postsynaptic density. Acts as a negative regulator of SRC by activating CSK which inhibits SRC activity and downstream signaling, leading to impaired cell spreading and migration. Regulates dendritic spine morphology. Involved in calcium-dependent exocytosis. May play a role in neurotransmitter release or synapse maintenance. The polypeptide is SRC kinase signaling inhibitor 1 (Homo sapiens (Human)).